The primary structure comprises 96 residues: Glutamyl-tRNA(Gln) amidotransferase subunit C (96 aa).

The protein belongs to the GatC family. In terms of assembly, heterotrimer of A, B and C subunits.

It catalyses the reaction L-glutamyl-tRNA(Gln) + L-glutamine + ATP + H2O = L-glutaminyl-tRNA(Gln) + L-glutamate + ADP + phosphate + H(+). The enzyme catalyses L-aspartyl-tRNA(Asn) + L-glutamine + ATP + H2O = L-asparaginyl-tRNA(Asn) + L-glutamate + ADP + phosphate + 2 H(+). Allows the formation of correctly charged Asn-tRNA(Asn) or Gln-tRNA(Gln) through the transamidation of misacylated Asp-tRNA(Asn) or Glu-tRNA(Gln) in organisms which lack either or both of asparaginyl-tRNA or glutaminyl-tRNA synthetases. The reaction takes place in the presence of glutamine and ATP through an activated phospho-Asp-tRNA(Asn) or phospho-Glu-tRNA(Gln). The protein is Glutamyl-tRNA(Gln) amidotransferase subunit C of Nostoc sp. (strain PCC 7120 / SAG 25.82 / UTEX 2576).